A 221-amino-acid chain; its full sequence is Oxaloacetate tautomerase oaa1, mitochondrial (221 aa).

Glu-59, Glu-61, and Asp-93 together coordinate Mg(2+).

Belongs to the FAH family. Mg(2+) serves as cofactor. The cofactor is Mn(2+).

The protein resides in the mitochondrion. Its subcellular location is the cytoplasm. The enzyme catalyses oxaloacetate = enol-oxaloacetate. Its function is as follows. Tautomerase that converts enol-oxaloacetate, a strong inhibitor of succinate dehydrogenase, to the physiological keto form of oxaloacetate. The sequence is that of Oxaloacetate tautomerase oaa1, mitochondrial from Schizosaccharomyces pombe (strain 972 / ATCC 24843) (Fission yeast).